Consider the following 258-residue polypeptide: Small ribosomal subunit protein uS2 (258 aa).

Positions 226-258 (KQGQDDEETLEVDFKENADGSEEIVSAEENPED) are disordered. Residues 244-258 (DGSEEIVSAEENPED) show a composition bias toward acidic residues.

The protein belongs to the universal ribosomal protein uS2 family.

This Lactobacillus acidophilus (strain ATCC 700396 / NCK56 / N2 / NCFM) protein is Small ribosomal subunit protein uS2.